We begin with the raw amino-acid sequence, 460 residues long: MDKMWSGRFSATASSLLDQFNASIMFDRKLYREDIEGSIAHATMLAKQGILTTDELSQITKGLSQVKEEIESGVFEWKISDEDLHMGIEKRLTAIIGDAGKKLHTARSRNDQVAVDFRRYVLRKNLEIVDALKLLMNEILVIASKHTQTLLPGMTHLQHAQPINFAFHLSAYLSMFKRDIERFESSYKRNNISPLGCAALAGTPHKIDRDMTAELLGFESASINCLDTVSDRDFALEILFNISTMMMHISRLSEELVMWSSYEFRFVELSDEYSTGSSIMPQKKNPDVPELLRGKTGRVYGSLMGLLTVMKALPLAYNKDTQEDKEGVFDAVETAEISLEILKEALKTMQVKPHYMKNACKIGHLSATDLADYLVQKCDIPFREAHFITGKAVAKSEELKIDLSDIELKYLKEIDDRINEDVLAFLSIENSMNARTSAGGTSTKRTEEQLKYFENFLKAE.

Belongs to the lyase 1 family. Argininosuccinate lyase subfamily.

Its subcellular location is the cytoplasm. It catalyses the reaction 2-(N(omega)-L-arginino)succinate = fumarate + L-arginine. It functions in the pathway amino-acid biosynthesis; L-arginine biosynthesis; L-arginine from L-ornithine and carbamoyl phosphate: step 3/3. This is Argininosuccinate lyase from Sulfurimonas denitrificans (strain ATCC 33889 / DSM 1251) (Thiomicrospira denitrificans (strain ATCC 33889 / DSM 1251)).